A 377-amino-acid polypeptide reads, in one-letter code: F-box protein At2g05970 (377 aa).

The F-box domain occupies 8–55; it reads ASWSELCPDVLRCVFELLSFSDLNRTRSVCSSWHSASRHCVPTQNQIP.

This is F-box protein At2g05970 from Arabidopsis thaliana (Mouse-ear cress).